Consider the following 154-residue polypeptide: Myoglobin (154 aa).

One can recognise a Globin domain in the interval Gly2–Lys148. Position 4 is a phosphoserine (Ser4). His65 provides a ligand contact to nitrite. An O2-binding site is contributed by His65. Thr68 is subject to Phosphothreonine. Heme b is bound at residue His94.

The protein belongs to the globin family. In terms of assembly, monomeric.

The protein resides in the cytoplasm. It is found in the sarcoplasm. It carries out the reaction Fe(III)-heme b-[protein] + nitric oxide + H2O = Fe(II)-heme b-[protein] + nitrite + 2 H(+). The catalysed reaction is H2O2 + AH2 = A + 2 H2O. Functionally, monomeric heme protein which primary function is to store oxygen and facilitate its diffusion within muscle tissues. Reversibly binds oxygen through a pentacoordinated heme iron and enables its timely and efficient release as needed during periods of heightened demand. Depending on the oxidative conditions of tissues and cells, and in addition to its ability to bind oxygen, it also has a nitrite reductase activity whereby it regulates the production of bioactive nitric oxide. Under stress conditions, like hypoxia and anoxia, it also protects cells against reactive oxygen species thanks to its pseudoperoxidase activity. The protein is Myoglobin (MB) of Pan troglodytes (Chimpanzee).